The sequence spans 423 residues: Gamma-glutamyl phosphate reductase (423 aa).

Belongs to the gamma-glutamyl phosphate reductase family.

The protein localises to the cytoplasm. It catalyses the reaction L-glutamate 5-semialdehyde + phosphate + NADP(+) = L-glutamyl 5-phosphate + NADPH + H(+). The protein operates within amino-acid biosynthesis; L-proline biosynthesis; L-glutamate 5-semialdehyde from L-glutamate: step 2/2. In terms of biological role, catalyzes the NADPH-dependent reduction of L-glutamate 5-phosphate into L-glutamate 5-semialdehyde and phosphate. The product spontaneously undergoes cyclization to form 1-pyrroline-5-carboxylate. This chain is Gamma-glutamyl phosphate reductase, found in Burkholderia pseudomallei (strain 1710b).